The primary structure comprises 151 residues: MGSDDQSAGDRIQKGFQINYMILRDADSGKIIWQENKDFSAPDQEHEARVPVKILEMRAVSREINFSTIESMENFRLDQKVLFKGRIMEEWFFEMGFVGANTTNTWQSTIEAAPESQMMPAKVLNGNVTIQTSFYDNETLITKSVVRLYYI.

It belongs to the PDE6D/unc-119 family. Interacts with Pde6.

The protein resides in the nucleus. The protein localises to the cytoplasm. This chain is Probable cGMP 3',5'-cyclic phosphodiesterase subunit delta, found in Drosophila erecta (Fruit fly).